The following is a 336-amino-acid chain: Inositol 2-dehydrogenase (336 aa).

Belongs to the Gfo/Idh/MocA family. In terms of assembly, homotetramer.

It carries out the reaction myo-inositol + NAD(+) = scyllo-inosose + NADH + H(+). Involved in the oxidation of myo-inositol (MI) to 2-keto-myo-inositol (2KMI or 2-inosose). The protein is Inositol 2-dehydrogenase of Salmonella agona (strain SL483).